The chain runs to 295 residues: 4-hydroxy-tetrahydrodipicolinate synthase (295 aa).

Thr-48 serves as a coordination point for pyruvate. Tyr-135 acts as the Proton donor/acceptor in catalysis. Catalysis depends on Lys-163, which acts as the Schiff-base intermediate with substrate. Val-204 contributes to the pyruvate binding site.

It belongs to the DapA family. As to quaternary structure, homotetramer; dimer of dimers.

It localises to the cytoplasm. The catalysed reaction is L-aspartate 4-semialdehyde + pyruvate = (2S,4S)-4-hydroxy-2,3,4,5-tetrahydrodipicolinate + H2O + H(+). It participates in amino-acid biosynthesis; L-lysine biosynthesis via DAP pathway; (S)-tetrahydrodipicolinate from L-aspartate: step 3/4. In terms of biological role, catalyzes the condensation of (S)-aspartate-beta-semialdehyde [(S)-ASA] and pyruvate to 4-hydroxy-tetrahydrodipicolinate (HTPA). In Francisella tularensis subsp. novicida (strain U112), this protein is 4-hydroxy-tetrahydrodipicolinate synthase.